Consider the following 92-residue polypeptide: Arrestin-C (92 aa).

Belongs to the arrestin family. In terms of assembly, homodimer; disulfide-linked in response to retinal illumination. Interacts with CXCR4; the interaction is dependent on the C-terminal phosphorylation of CXCR4 and modulates the calcium ion mobilization activity of CXCR4. Interacts with GPR84. As to expression, retina and pineal gland.

The protein resides in the photoreceptor inner segment. It localises to the cell projection. The protein localises to the cilium. Its subcellular location is the photoreceptor outer segment. Its function is as follows. May play a role in an as yet undefined retina-specific signal transduction. Could bind to photoactivated-phosphorylated red/green opsins. This Rattus norvegicus (Rat) protein is Arrestin-C (Arr3).